The following is a 115-amino-acid chain: Basic leucine zipper transcriptional factor ATF-like (115 aa).

The interval 1–57 (MQQEPDRNEQGYCSSPPSSNKQDSSDDTKKIQRREKNRIAAQKSRQRQTQKADSLHI) is disordered. The region spanning 27 to 90 (DTKKIQRREK…KYLTCVLSTH (64 aa)) is the bZIP domain. The segment at 29–51 (KKIQRREKNRIAAQKSRQRQTQK) is basic motif. Residues 55–83 (LHIESENLERLNSALRGEISGLREELKYL) form a leucine-zipper region.

The protein belongs to the bZIP family.

Its subcellular location is the nucleus. It is found in the cytoplasm. Functionally, AP-1 family transcription factor that controls the differentiation of lineage-specific cells in the immune system: specifically mediates the differentiation of T-helper 17 cells (Th17), follicular T-helper cells (TfH), CD8(+) dendritic cells and class-switch recombination (CSR) in B-cells. The protein is Basic leucine zipper transcriptional factor ATF-like (batf) of Xenopus tropicalis (Western clawed frog).